The primary structure comprises 479 residues: Probable cytosol aminopeptidase (479 aa).

The Mn(2+) site is built by K247 and D252. K259 is an active-site residue. Mn(2+) contacts are provided by D270, D329, and E331. R333 is an active-site residue.

This sequence belongs to the peptidase M17 family. It depends on Mn(2+) as a cofactor.

The protein resides in the cytoplasm. The catalysed reaction is Release of an N-terminal amino acid, Xaa-|-Yaa-, in which Xaa is preferably Leu, but may be other amino acids including Pro although not Arg or Lys, and Yaa may be Pro. Amino acid amides and methyl esters are also readily hydrolyzed, but rates on arylamides are exceedingly low.. It catalyses the reaction Release of an N-terminal amino acid, preferentially leucine, but not glutamic or aspartic acids.. Functionally, presumably involved in the processing and regular turnover of intracellular proteins. Catalyzes the removal of unsubstituted N-terminal amino acids from various peptides. The chain is Probable cytosol aminopeptidase from Vesicomyosocius okutanii subsp. Calyptogena okutanii (strain HA).